The chain runs to 422 residues: Dihydroorotase (422 aa).

2 residues coordinate Zn(2+): H57 and H59. Residues 59-61 (HLR) and N91 contribute to the substrate site. 3 residues coordinate Zn(2+): D149, H176, and H229. Residue N275 participates in substrate binding. Residue D302 coordinates Zn(2+). Residue D302 is part of the active site. Substrate-binding positions include H306 and 320 to 321 (FG).

Belongs to the metallo-dependent hydrolases superfamily. DHOase family. Class I DHOase subfamily. Requires Zn(2+) as cofactor.

It carries out the reaction (S)-dihydroorotate + H2O = N-carbamoyl-L-aspartate + H(+). The protein operates within pyrimidine metabolism; UMP biosynthesis via de novo pathway; (S)-dihydroorotate from bicarbonate: step 3/3. In terms of biological role, catalyzes the reversible cyclization of carbamoyl aspartate to dihydroorotate. The sequence is that of Dihydroorotase from Endomicrobium trichonymphae.